Here is a 252-residue protein sequence, read N- to C-terminus: SPbeta prophage-derived uncharacterized protein YomH (252 aa).

This chain is SPbeta prophage-derived uncharacterized protein YomH (yomH), found in Bacillus subtilis (strain 168).